We begin with the raw amino-acid sequence, 119 residues long: Ribonuclease P protein component (119 aa).

Belongs to the RnpA family. As to quaternary structure, consists of a catalytic RNA component (M1 or rnpB) and a protein subunit.

The enzyme catalyses Endonucleolytic cleavage of RNA, removing 5'-extranucleotides from tRNA precursor.. RNaseP catalyzes the removal of the 5'-leader sequence from pre-tRNA to produce the mature 5'-terminus. It can also cleave other RNA substrates such as 4.5S RNA. The protein component plays an auxiliary but essential role in vivo by binding to the 5'-leader sequence and broadening the substrate specificity of the ribozyme. The chain is Ribonuclease P protein component from Beutenbergia cavernae (strain ATCC BAA-8 / DSM 12333 / CCUG 43141 / JCM 11478 / NBRC 16432 / NCIMB 13614 / HKI 0122).